We begin with the raw amino-acid sequence, 526 residues long: Tyrosine 2,3-aminomutase (526 aa).

Tyr41 functions as the Proton donor/acceptor in the catalytic mechanism. His71 serves as a coordination point for substrate. The 5-imidazolinone (Ala-Gly) cross-link spans Ala130 to Gly132. Ser131 carries the post-translational modification 2,3-didehydroalanine (Ser). 2 residues coordinate substrate: Asn183 and Arg288.

This sequence belongs to the TAL/TAM family. In terms of assembly, homotetramer; dimer of dimers. In terms of processing, contains an active site 4-methylidene-imidazol-5-one (MIO), which is formed autocatalytically by cyclization and dehydration of residues Ala-Ser-Gly.

It catalyses the reaction L-tyrosine = 3-amino-3-(4-hydroxyphenyl)propanoate. The catalysed reaction is L-tyrosine = (E)-4-coumarate + NH4(+). Functionally, has aminomutase and, to a much lesser extent, ammonia-lyase activity. Primarily, catalyzes the rearrangement of L-tyrosine to S-beta-tyrosine, which is probably incorporated into secondary metabolite myxovalargin. The aminomutase activity exclusively produces S-beta-tyrosine. This chain is Tyrosine 2,3-aminomutase, found in Myxococcus fulvus.